The chain runs to 160 residues: CXXC motif containing zinc binding protein (160 aa).

Residues cysteine 33, cysteine 36, cysteine 67, and cysteine 70 each coordinate Zn(2+). Serine 75 bears the Phosphoserine mark.

The protein belongs to the UPF0587 family. Monomer.

The sequence is that of CXXC motif containing zinc binding protein from Homo sapiens (Human).